The primary structure comprises 186 residues: MTQQSPAFIGPAWLEREQLIDAPDPVMLDWLFNQDSLTRRLDRLSDGRFSVFPQFEGWQPLRPDECLALGLPEAGEGWVREVYLRGNGNNWVFARSVAARSALQDGGLDMDELGTRSLGELLFSDPAFVRGTLEVCHYPEAWLPAADAARGLWARRSRFDRDALSVLVAEVFLPALCTAIHDKDHV.

Residues Arg80, Leu118, and Glu170 each contribute to the substrate site.

Belongs to the UbiC family.

Its subcellular location is the cytoplasm. The catalysed reaction is chorismate = 4-hydroxybenzoate + pyruvate. It participates in cofactor biosynthesis; ubiquinone biosynthesis. Functionally, removes the pyruvyl group from chorismate, with concomitant aromatization of the ring, to provide 4-hydroxybenzoate (4HB) for the ubiquinone pathway. The protein is Probable chorismate pyruvate-lyase of Pseudomonas syringae pv. syringae (strain B728a).